We begin with the raw amino-acid sequence, 1094 residues long: Isoleucine--tRNA ligase (1094 aa).

The 'HIGH' region motif lies at 53–63 (PFANGLPHYGH). The 'KMSKS' region motif lies at 624-628 (KLSKR). Lys-627 provides a ligand contact to ATP.

This sequence belongs to the class-I aminoacyl-tRNA synthetase family. IleS type 2 subfamily. Monomer. The cofactor is Zn(2+).

Its subcellular location is the cytoplasm. It catalyses the reaction tRNA(Ile) + L-isoleucine + ATP = L-isoleucyl-tRNA(Ile) + AMP + diphosphate. Functionally, catalyzes the attachment of isoleucine to tRNA(Ile). As IleRS can inadvertently accommodate and process structurally similar amino acids such as valine, to avoid such errors it has two additional distinct tRNA(Ile)-dependent editing activities. One activity is designated as 'pretransfer' editing and involves the hydrolysis of activated Val-AMP. The other activity is designated 'posttransfer' editing and involves deacylation of mischarged Val-tRNA(Ile). This chain is Isoleucine--tRNA ligase, found in Rickettsia felis (strain ATCC VR-1525 / URRWXCal2) (Rickettsia azadi).